Reading from the N-terminus, the 462-residue chain is uncharacterized protein (462 aa).

7 WD repeats span residues 170–209, 212–260, 263–302, 305–344, 347–386, 389–430, and 433–462; these read GGER…EVQL, GHTD…PLLR, GHLA…ELLM, GHSE…SIMV, EHIR…LAHT, AHSS…LIKS, and GHEE…LWYP.

The protein localises to the cytoplasm. This is an uncharacterized protein from Schizosaccharomyces pombe (strain 972 / ATCC 24843) (Fission yeast).